The chain runs to 756 residues: Protein SDA1 homolog (756 aa).

Positions 227 to 282 (EEEEDEAVKEKRAKDNFRKKSLAHRVGKKTKGRITRLAKSKVDLKKAKQEEDNKLQ) form a coiled coil. 2 stretches are compositionally biased toward acidic residues: residues 494 to 514 (AGEE…EGWE) and 521 to 596 (ADDD…EEEE). Disordered regions lie at residues 494 to 615 (AGEE…VLRT) and 638 to 756 (AREN…RGRH). The span at 605-615 (QQKEKVEVLRT) shows a compositional bias: basic and acidic residues. Positions 647–656 (DMDQDDDENG) are enriched in acidic residues. Basic and acidic residues predominate over residues 677–691 (EEKLERIARAKEGRD). The span at 725–735 (KTKKVRGKSLK) shows a compositional bias: basic residues. A compositionally biased stretch (basic and acidic residues) spans 736-749 (SFRDKQIGQREHSA).

Belongs to the SDA1 family.

The protein localises to the nucleus. Its subcellular location is the nucleolus. In terms of biological role, required for 60S pre-ribosomal subunits export to the cytoplasm. The chain is Protein SDA1 homolog (sdad1) from Dictyostelium discoideum (Social amoeba).